Reading from the N-terminus, the 192-residue chain is Orotate phosphoribosyltransferase (192 aa).

Residues R101, K102, K105, H107, and 129–137 (EDVITTGGS) contribute to the 5-phospho-alpha-D-ribose 1-diphosphate site. Orotate is bound by residues T133 and R161.

The protein belongs to the purine/pyrimidine phosphoribosyltransferase family. PyrE subfamily. In terms of assembly, homodimer. It depends on Mg(2+) as a cofactor.

It catalyses the reaction orotidine 5'-phosphate + diphosphate = orotate + 5-phospho-alpha-D-ribose 1-diphosphate. The protein operates within pyrimidine metabolism; UMP biosynthesis via de novo pathway; UMP from orotate: step 1/2. Functionally, catalyzes the transfer of a ribosyl phosphate group from 5-phosphoribose 1-diphosphate to orotate, leading to the formation of orotidine monophosphate (OMP). This is Orotate phosphoribosyltransferase from Sorangium cellulosum (strain So ce56) (Polyangium cellulosum (strain So ce56)).